We begin with the raw amino-acid sequence, 475 residues long: Putative response regulator NtrX-like (475 aa).

One can recognise a Response regulatory domain in the interval 5–121; it reads DVLILDDEES…KLIILLKRAC (117 aa). Position 54 is a 4-aspartylphosphate (aspartate 54). Positions 143–369 constitute a Sigma-54 factor interaction domain; that stretch reads LVGGCSVTLK…LRNVVEWTLI (227 aa). ATP is bound by residues 171–178 and 232–241; these read GKVGSGKE and ANNGTLYIDE.

In terms of biological role, member of the two-component regulatory system RT0550/RT0603. This Rickettsia typhi (strain ATCC VR-144 / Wilmington) protein is Putative response regulator NtrX-like.